The primary structure comprises 400 residues: Large envelope protein (400 aa).

Residue methionine 1 is modified to N-acetylmethionine. A lipid anchor (N-myristoyl glycine; by host) is attached at glycine 2. The tract at residues 2–119 is pre-S1; the sequence is GGWSSKHRKG…PPLRDTHPQA (118 aa). Residues 2 to 174 are pre-S; sequence GGWSSKHRKG…FTKTGDPASN (173 aa). The Virion surface; in external conformation portion of the chain corresponds to 2 to 181; it reads GGWSSKHRKG…ASNMESTTSG (180 aa). Over 2–253 the chain is Intravirion; in internal conformation; it reads GGWSSKHRKG…PGYRWMCLRR (252 aa). Residue tryptophan 4 is glycosylated (N-linked (GlcNAc...) asparagine). The interval 89–117 is disordered; that stretch reads PAAPPPASTNRQSGRQPTPISPPLRDTHP. A compositionally biased stretch (polar residues) spans 96 to 106; it reads STNRQSGRQPT. Positions 120–174 are pre-S2; sequence MQWNSTAFHQALQDPRVRGLYFPAGGSSSGTVNPVPNTVSHISSIFTKTGDPASN. A helical transmembrane segment spans residues 182–202; sequence FLGPLLVLQAGFFLLTRILTI. The Intravirion; in external conformation segment spans residues 203–253; sequence PQSLDSWWTSLNFLGGAPGCIGQNSQSQTSNHSPTSCPPTCPGYRWMCLRR. Residues 254–274 form a helical membrane-spanning segment; the sequence is FIIFLFILLLCLIFLLVLLDY. At 275–348 the chain is on the virion surface side; sequence QGMLPVCPLL…WASVRFSWLS (74 aa). Asparagine 320 is a glycosylation site (N-linked (GlcNAc...) asparagine; by host). A helical membrane pass occupies residues 349–369; it reads LLVPFVQWFAGLSPTVWLSVI. Topologically, residues 370-375 are intravirion; sequence WMIWYW. A helical membrane pass occupies residues 376–398; that stretch reads GPSLYNILSPFLPLLPIFLCLWV. At 399-400 the chain is on the virion surface side; sequence YI.

The protein belongs to the orthohepadnavirus major surface antigen family. As to quaternary structure, in its internal form (Li-HBsAg), interacts with the capsid protein and with the isoform S. Interacts with host chaperone CANX. Associates with host chaperone CANX through its pre-S2 N glycan; this association may be essential for isoform M proper secretion. In terms of assembly, interacts with isoform L. Interacts with the antigens of satellite virus HDV (HDVAgs); this interaction is required for encapsidation of HDV genomic RNA. Isoform M is N-terminally acetylated by host at a ratio of 90%, and N-glycosylated by host at the pre-S2 region. In terms of processing, myristoylated.

The protein resides in the virion membrane. The large envelope protein exists in two topological conformations, one which is termed 'external' or Le-HBsAg and the other 'internal' or Li-HBsAg. In its external conformation the protein attaches the virus to cell receptors and thereby initiating infection. This interaction determines the species specificity and liver tropism. This attachment induces virion internalization predominantly through caveolin-mediated endocytosis. The large envelope protein also assures fusion between virion membrane and endosomal membrane. In its internal conformation the protein plays a role in virion morphogenesis and mediates the contact with the nucleocapsid like a matrix protein. Its function is as follows. The middle envelope protein plays an important role in the budding of the virion. It is involved in the induction of budding in a nucleocapsid independent way. In this process the majority of envelope proteins bud to form subviral lipoprotein particles of 22 nm of diameter that do not contain a nucleocapsid. This Homo sapiens (Human) protein is Large envelope protein.